The primary structure comprises 2157 residues: Genome polyprotein (2157 aa).

A lipid anchor (N-myristoyl glycine; by host) is attached at Gly-2. Residues 2-1470 lie on the Cytoplasmic side of the membrane; the sequence is GAQVSRQNVG…DLSIANSIIT (1469 aa). Positions 567–584 are amphipathic alpha-helix; that stretch reads PIEQNPVENYIDEVLNEV. Catalysis depends on for protease 2A activity residues His-875 and Asp-892. The Zn(2+) site is built by Cys-909 and Cys-911. The active-site For protease 2A activity is the Cys-963. 2 residues coordinate Zn(2+): Cys-969 and His-971. The segment at 1095-1164 is membrane-binding; that stretch reads SDSWLKKFTE…NLRAADNATQ (70 aa). Residues 1095–1228 are oligomerization; that stretch reads SDSWLKKFTE…PPGTGKSITT (134 aa). Positions 1116–1120 are RNA-binding; it reads GNKIS. Positions 1188–1350 constitute an SF3 helicase domain; the sequence is EAKRIKVLYN…YKDAQGKLNV (163 aa). Zn(2+) contacts are provided by Cys-1357, Cys-1368, and Cys-1373. Residues 1357–1373 form a C4-type; degenerate zinc finger; sequence CNVNTKIGNAKCCPFVC. Positions 1400-1407 are RNA-binding; sequence EDKRRRQV. Positions 1411-1416 are oligomerization; that stretch reads MSAIFQ. An intramembrane segment occupies 1471–1486; that stretch reads IIANIISIAGIIFVIY. The Cytoplasmic segment spans residues 1487 to 2157; it reads KLFCTLQGPY…LLKHEWYEKF (671 aa). Tyr-1496 is subject to O-(5'-phospho-RNA)-tyrosine. Residues 1515–1693 form the Peptidase C3 domain; sequence GPEEEFGRSI…FSAMLLRSYF (179 aa). Catalysis depends on for protease 3C activity residues His-1554, Glu-1585, and Cys-1661. The RdRp catalytic domain occupies 1925-2038; it reads DCIMAFDYTN…SYKYTLDMEA (114 aa). Mg(2+) contacts are provided by Asp-1931 and Asp-2024.

Belongs to the picornaviruses polyprotein family. Interacts with capsid protein VP1 and capsid protein VP3 to form heterotrimeric protomers. In terms of assembly, interacts with capsid protein VP0, and capsid protein VP3 to form heterotrimeric protomers. Five protomers subsequently associate to form pentamers which serve as building blocks for the capsid. Interacts with capsid protein VP2, capsid protein VP3 and capsid protein VP4 following cleavage of capsid protein VP0. As to quaternary structure, interacts with capsid protein VP1 and capsid protein VP3 in the mature capsid. Interacts with capsid protein VP0 and capsid protein VP1 to form heterotrimeric protomers. Five protomers subsequently associate to form pentamers which serve as building blocks for the capsid. Interacts with capsid protein VP4 in the mature capsid. Interacts with protein 2C; this interaction may be important for virion morphogenesis. In terms of assembly, interacts with capsid protein VP1 and capsid protein VP3. As to quaternary structure, homodimer. Homohexamer; forms a hexameric ring structure with 6-fold symmetry characteristic of AAA+ ATPases. Interacts (via N-terminus) with host RTN3 (via reticulon domain); this interaction is important for viral replication. Interacts with capsid protein VP3; this interaction may be important for virion morphogenesis. In terms of assembly, interacts with protein 3CD. As to quaternary structure, homodimer. Interacts with host GBF1. Interacts (via GOLD domain) with host ACBD3 (via GOLD domain); this interaction allows the formation of a viral protein 3A/ACBD3 heterotetramer with a 2:2 stoichiometry, which will stimulate the recruitment of host PI4KB in order to synthesize PI4P at the viral RNA replication sites. Interacts with RNA-directed RNA polymerase. In terms of assembly, interacts with protein 3AB and with RNA-directed RNA polymerase. As to quaternary structure, interacts with Viral protein genome-linked and with protein 3CD. Requires Mg(2+) as cofactor. In terms of processing, specific enzymatic cleavages in vivo by the viral proteases yield processing intermediates and the mature proteins. Post-translationally, myristoylation is required for the formation of pentamers during virus assembly. Further assembly of 12 pentamers and a molecule of genomic RNA generates the provirion. During virion maturation, immature virions are rendered infectious following cleavage of VP0 into VP4 and VP2. This maturation seems to be an autocatalytic event triggered by the presence of RNA in the capsid and it is followed by a conformational change infectious virion. In terms of processing, myristoylation is required during RNA encapsidation and formation of the mature virus particle. Post-translationally, VPg is uridylylated by the polymerase into VPg-pUpU. This acts as a nucleotide-peptide primer for the genomic RNA replication.

Its subcellular location is the virion. It is found in the host cytoplasm. It localises to the host cytoplasmic vesicle membrane. The protein localises to the host nucleus. It carries out the reaction a ribonucleoside 5'-triphosphate + H2O = a ribonucleoside 5'-diphosphate + phosphate + H(+). It catalyses the reaction Selective cleavage of Tyr-|-Gly bond in the picornavirus polyprotein.. The enzyme catalyses RNA(n) + a ribonucleoside 5'-triphosphate = RNA(n+1) + diphosphate. The catalysed reaction is Selective cleavage of Gln-|-Gly bond in the poliovirus polyprotein. In other picornavirus reactions Glu may be substituted for Gln, and Ser or Thr for Gly.. Replication or transcription is subject to high level of random mutations by the nucleotide analog ribavirin. Functionally, forms an icosahedral capsid of pseudo T=3 symmetry with capsid proteins VP2 and VP3. The capsid is 300 Angstroms in diameter, composed of 60 copies of each capsid protein and enclosing the viral positive strand RNA genome. Capsid protein VP1 mainly forms the vertices of the capsid. Capsid protein VP1 interacts with host cell receptor to provide virion attachment to target host cells. This attachment induces virion internalization. Tyrosine kinases are probably involved in the entry process. After binding to its receptor, the capsid undergoes conformational changes. Capsid protein VP1 N-terminus (that contains an amphipathic alpha-helix) and capsid protein VP4 are externalized. Together, they shape a pore in the host membrane through which viral genome is translocated to host cell cytoplasm. In terms of biological role, forms an icosahedral capsid of pseudo T=3 symmetry with capsid proteins VP2 and VP3. The capsid is 300 Angstroms in diameter, composed of 60 copies of each capsid protein and enclosing the viral positive strand RNA genome. Lies on the inner surface of the capsid shell. After binding to the host receptor, the capsid undergoes conformational changes. Capsid protein VP4 is released, Capsid protein VP1 N-terminus is externalized, and together, they shape a pore in the host membrane through which the viral genome is translocated into the host cell cytoplasm. Its function is as follows. Component of immature procapsids, which is cleaved into capsid proteins VP4 and VP2 after maturation. Allows the capsid to remain inactive before the maturation step. Functionally, cysteine protease that cleaves viral polyprotein and specific host proteins. It is responsible for the autocatalytic cleavage between the P1 and P2 regions, which is the first cleavage occurring in the polyprotein. Also cleaves the host translation initiation factor EIF4G1, in order to shut down the capped cellular mRNA translation. Inhibits the host nucleus-cytoplasm protein and RNA trafficking by cleaving host members of the nuclear pores. Counteracts stress granule formation probably by antagonizing its assembly or promoting its dissassembly. In terms of biological role, plays an essential role in the virus replication cycle by acting as a viroporin. Creates a pore in the host endoplasmic reticulum and as a consequence releases Ca2+ in the cytoplasm of infected cell. In turn, high levels of cytoplasmic calcium may trigger membrane trafficking and transport of viral ER-associated proteins to viroplasms, sites of viral genome replication. Induces and associates with structural rearrangements of intracellular membranes. Displays RNA-binding, nucleotide binding and NTPase activities. May play a role in virion morphogenesis and viral RNA encapsidation by interacting with the capsid protein VP3. Its function is as follows. Localizes the viral replication complex to the surface of membranous vesicles. Together with protein 3CD binds the Cis-Active RNA Element (CRE) which is involved in RNA synthesis initiation. Acts as a cofactor to stimulate the activity of 3D polymerase, maybe through a nucleid acid chaperone activity. Functionally, localizes the viral replication complex to the surface of membranous vesicles. It inhibits host cell endoplasmic reticulum-to-Golgi apparatus transport and causes the disassembly of the Golgi complex, possibly through GBF1 interaction. This would result in depletion of MHC, trail receptors and IFN receptors at the host cell surface. Plays an essential role in viral RNA replication by recruiting ACBD3 and PI4KB at the viral replication sites, thereby allowing the formation of the rearranged membranous structures where viral replication takes place. In terms of biological role, acts as a primer for viral RNA replication and remains covalently bound to viral genomic RNA. VPg is uridylylated prior to priming replication into VPg-pUpU. The oriI viral genomic sequence may act as a template for this. The VPg-pUpU is then used as primer on the genomic RNA poly(A) by the RNA-dependent RNA polymerase to replicate the viral genome. During genome replication, the VPg-RNA linkage is removed by the host TDP2, thereby accelerating replication. During the late stage of the replication cycle, host TDP2 is excluded from sites of viral RNA synthesis and encapsidation, allowing for the generation of progeny virions. Involved in the viral replication complex and viral polypeptide maturation. It exhibits protease activity with a specificity and catalytic efficiency that is different from protease 3C. Protein 3CD lacks polymerase activity. Protein 3CD binds to the 5'UTR of the viral genome. Its function is as follows. Replicates the viral genomic RNA on the surface of intracellular membranes. May form linear arrays of subunits that propagate along a strong head-to-tail interaction called interface-I. Covalently attaches UMP to a tyrosine of VPg, which is used to prime RNA synthesis. The positive stranded RNA genome is first replicated at virus induced membranous vesicles, creating a dsRNA genomic replication form. This dsRNA is then used as template to synthesize positive stranded RNA genomes. ss(+)RNA genomes are either translated, replicated or encapsidated. Functionally, major viral protease that mediates proteolytic processing of the polyprotein. Cleaves host EIF5B, contributing to host translation shutoff. Also cleaves host PABPC1, contributing to host translation shutoff. Cleaves host NLRP1, triggers host N-glycine-mediated degradation of the autoinhibitory NLRP1 N-terminal fragment. This is Genome polyprotein from Homo sapiens (Human).